The primary structure comprises 424 residues: Putative chloroquine resistance transporter (424 aa).

The Cytoplasmic portion of the chain corresponds to 1 to 57 (MKILKKKKKGNQQIVPDERYRELDSHAPNENEIADEAPMSRKILYYLKLVYHEIREN). The chain crosses the membrane as a helical span at residues 58-78 (ITIYLLIILYLCVCVMNKIMA). Residues 79 to 89 (KRTLKKIGNYS) are Vacuolar-facing. A glycan (N-linked (GlcNAc...) asparagine) is linked at Asn87. The chain crosses the membrane as a helical span at residues 90–110 (FVTSETHNTICMVVFFSLYFI). At 111 to 124 (FGRRVTSAKERHQN) the chain is on the cytoplasmic side. The chain crosses the membrane as a helical span at residues 125–145 (FGLQFLLISLLDACSVIIAFI). Residues 146–153 (GLTRTTGN) are Vacuolar-facing. Residues 154-174 (IQSFVMQLSIPINMFFCFLIL) form a helical membrane-spanning segment. Topologically, residues 175-179 (RYRYH) are cytoplasmic. The chain crosses the membrane as a helical span at residues 180 to 200 (LFNYVGASIIVLTIAIVEFIL). Over 201–208 (SFETQEEN) the chain is Vacuolar. A helical transmembrane segment spans residues 209 to 229 (SIVFNLVLIASLIPMSFSNMT). Topologically, residues 230–246 (REIVFKKYKINILRLNA) are cytoplasmic. A helical membrane pass occupies residues 247-267 (VVSFFQIFTSCLMLPMYTLPF). Residues 268-316 (LKQINLPFSEIGTNIKNGFRCLILGQNTIVENCGLGMAKMCDDCEGAWK) lie on the Vacuolar side of the membrane. 2 cysteine pairs are disulfide-bonded: Cys288/Cys311 and Cys300/Cys308. A helical membrane pass occupies residues 317 to 337 (TFLAYSFFNICDNLITSFIID). Topologically, residues 338 to 345 (KFSTMTYT) are cytoplasmic. The helical transmembrane segment at 346–366 (IVSCIQGPAIAIAYYFKFLAG) threads the bilayer. Residues 367–376 (DAVMKPRVLD) are Vacuolar-facing. A helical membrane pass occupies residues 377–397 (FVTLFGYLFGSIIYRVGNIIL). Topologically, residues 398-424 (EKKKMMEAGNDDDSEGELTNAESIITQ) are cytoplasmic.

The protein belongs to the CRT-like transporter family.

The protein localises to the vacuole membrane. In terms of biological role, nutrient transporter. Involved in maintaining the osmotic homeostasis of the digestive vacuole. The protein is Putative chloroquine resistance transporter of Plasmodium knowlesi.